The following is a 558-amino-acid chain: Membrane protein insertase YidC (558 aa).

6 helical membrane-spanning segments follow: residues 5–25 (IINL…WQYF), 332–352 (AIDF…MNFF), 355–375 (YVGN…LLMF), 429–449 (LPIL…YVTI), 474–494 (LFGL…WPIL), and 520–540 (FMPL…LIYW).

Belongs to the OXA1/ALB3/YidC family. Type 1 subfamily. Interacts with the Sec translocase complex via SecD. Specifically interacts with transmembrane segments of nascent integral membrane proteins during membrane integration.

Its subcellular location is the cell inner membrane. Required for the insertion and/or proper folding and/or complex formation of integral membrane proteins into the membrane. Involved in integration of membrane proteins that insert both dependently and independently of the Sec translocase complex, as well as at least some lipoproteins. Aids folding of multispanning membrane proteins. This chain is Membrane protein insertase YidC, found in Rickettsia typhi (strain ATCC VR-144 / Wilmington).